The following is a 209-amino-acid chain: Orotate phosphoribosyltransferase (209 aa).

5-phospho-alpha-D-ribose 1-diphosphate is bound by residues arginine 96, lysine 100, histidine 102, and 122 to 130 (EDLISTGGS). Position 126 (serine 126) interacts with orotate.

The protein belongs to the purine/pyrimidine phosphoribosyltransferase family. PyrE subfamily. Homodimer. Mg(2+) serves as cofactor.

The enzyme catalyses orotidine 5'-phosphate + diphosphate = orotate + 5-phospho-alpha-D-ribose 1-diphosphate. It functions in the pathway pyrimidine metabolism; UMP biosynthesis via de novo pathway; UMP from orotate: step 1/2. Catalyzes the transfer of a ribosyl phosphate group from 5-phosphoribose 1-diphosphate to orotate, leading to the formation of orotidine monophosphate (OMP). The protein is Orotate phosphoribosyltransferase of Streptococcus agalactiae serotype III (strain NEM316).